Here is a 199-residue protein sequence, read N- to C-terminus: Recombination protein RecR (199 aa).

Residues 57 to 72 (CQSCRTFTEETYCPIC) form a C4-type zinc finger. A Toprim domain is found at 81-176 (EVICVVETPA…TVSRIAHGVP (96 aa)).

The protein belongs to the RecR family.

Its function is as follows. May play a role in DNA repair. It seems to be involved in an RecBC-independent recombinational process of DNA repair. It may act with RecF and RecO. The polypeptide is Recombination protein RecR (Shewanella pealeana (strain ATCC 700345 / ANG-SQ1)).